A 1047-amino-acid polypeptide reads, in one-letter code: Isoleucine--tRNA ligase (1047 aa).

The short motif at 52 to 62 is the 'HIGH' region element; the sequence is PTANGMPGAHH. The 'KMSKS' region motif lies at 600 to 604; it reads KMSKH. Lys-603 is a binding site for ATP.

Belongs to the class-I aminoacyl-tRNA synthetase family. IleS type 2 subfamily. In terms of assembly, monomer. Zn(2+) is required as a cofactor.

The protein localises to the cytoplasm. It catalyses the reaction tRNA(Ile) + L-isoleucine + ATP = L-isoleucyl-tRNA(Ile) + AMP + diphosphate. Its function is as follows. Catalyzes the attachment of isoleucine to tRNA(Ile). As IleRS can inadvertently accommodate and process structurally similar amino acids such as valine, to avoid such errors it has two additional distinct tRNA(Ile)-dependent editing activities. One activity is designated as 'pretransfer' editing and involves the hydrolysis of activated Val-AMP. The other activity is designated 'posttransfer' editing and involves deacylation of mischarged Val-tRNA(Ile). The sequence is that of Isoleucine--tRNA ligase from Streptomyces coelicolor (strain ATCC BAA-471 / A3(2) / M145).